Consider the following 145-residue polypeptide: 3-hydroxyacyl-[acyl-carrier-protein] dehydratase FabZ (145 aa).

Histidine 49 is a catalytic residue.

It belongs to the thioester dehydratase family. FabZ subfamily.

The protein localises to the cytoplasm. It carries out the reaction a (3R)-hydroxyacyl-[ACP] = a (2E)-enoyl-[ACP] + H2O. In terms of biological role, involved in unsaturated fatty acids biosynthesis. Catalyzes the dehydration of short chain beta-hydroxyacyl-ACPs and long chain saturated and unsaturated beta-hydroxyacyl-ACPs. The chain is 3-hydroxyacyl-[acyl-carrier-protein] dehydratase FabZ from Rickettsia conorii (strain ATCC VR-613 / Malish 7).